We begin with the raw amino-acid sequence, 85 residues long: Small ribosomal subunit protein uS17 (85 aa).

The protein belongs to the universal ribosomal protein uS17 family. As to quaternary structure, part of the 30S ribosomal subunit.

Functionally, one of the primary rRNA binding proteins, it binds specifically to the 5'-end of 16S ribosomal RNA. This chain is Small ribosomal subunit protein uS17, found in Haemophilus influenzae (strain 86-028NP).